The primary structure comprises 381 residues: Queuine tRNA-ribosyltransferase (381 aa).

Aspartate 96 acts as the Proton acceptor in catalysis. Residues 96-100 (DSGGF), aspartate 150, glutamine 193, and glycine 220 each bind substrate. Residues 251-257 (GVGSPDS) form an RNA binding region. Aspartate 270 (nucleophile) is an active-site residue. Residues 275–279 (TRIAR) form an RNA binding; important for wobble base 34 recognition region. Cysteine 308, cysteine 310, cysteine 313, and histidine 339 together coordinate Zn(2+).

The protein belongs to the queuine tRNA-ribosyltransferase family. Homodimer. Within each dimer, one monomer is responsible for RNA recognition and catalysis, while the other monomer binds to the replacement base PreQ1. Zn(2+) serves as cofactor.

It carries out the reaction 7-aminomethyl-7-carbaguanine + guanosine(34) in tRNA = 7-aminomethyl-7-carbaguanosine(34) in tRNA + guanine. The protein operates within tRNA modification; tRNA-queuosine biosynthesis. Its function is as follows. Catalyzes the base-exchange of a guanine (G) residue with the queuine precursor 7-aminomethyl-7-deazaguanine (PreQ1) at position 34 (anticodon wobble position) in tRNAs with GU(N) anticodons (tRNA-Asp, -Asn, -His and -Tyr). Catalysis occurs through a double-displacement mechanism. The nucleophile active site attacks the C1' of nucleotide 34 to detach the guanine base from the RNA, forming a covalent enzyme-RNA intermediate. The proton acceptor active site deprotonates the incoming PreQ1, allowing a nucleophilic attack on the C1' of the ribose to form the product. After dissociation, two additional enzymatic reactions on the tRNA convert PreQ1 to queuine (Q), resulting in the hypermodified nucleoside queuosine (7-(((4,5-cis-dihydroxy-2-cyclopenten-1-yl)amino)methyl)-7-deazaguanosine). The polypeptide is Queuine tRNA-ribosyltransferase (Bacillus pumilus (strain SAFR-032)).